A 370-amino-acid chain; its full sequence is GTPase Obg (370 aa).

Residues 1–159 enclose the Obg domain; the sequence is MKFIDEARIE…RMLRLELKVL (159 aa). Positions 160-334 constitute an OBG-type G domain; the sequence is ADVGLLGMPN…LCYAIYDYLA (175 aa). Residues 166–173, 191–195, 213–216, 284–287, and 315–317 each bind GTP; these read GMPNAGKS, FTTLA, DIPG, NKLD, and SAL. S173 and T193 together coordinate Mg(2+). The interval 344-370 is disordered; the sequence is EEEDLATDVRFRDAPPADGGATPGDDA.

This sequence belongs to the TRAFAC class OBG-HflX-like GTPase superfamily. OBG GTPase family. In terms of assembly, monomer. It depends on Mg(2+) as a cofactor.

Its subcellular location is the cytoplasm. In terms of biological role, an essential GTPase which binds GTP, GDP and possibly (p)ppGpp with moderate affinity, with high nucleotide exchange rates and a fairly low GTP hydrolysis rate. Plays a role in control of the cell cycle, stress response, ribosome biogenesis and in those bacteria that undergo differentiation, in morphogenesis control. In Burkholderia ambifaria (strain ATCC BAA-244 / DSM 16087 / CCUG 44356 / LMG 19182 / AMMD) (Burkholderia cepacia (strain AMMD)), this protein is GTPase Obg.